The primary structure comprises 122 residues: Large ribosomal subunit protein uL18 (122 aa).

This sequence belongs to the universal ribosomal protein uL18 family. In terms of assembly, part of the 50S ribosomal subunit; part of the 5S rRNA/L5/L18/L25 subcomplex. Contacts the 5S and 23S rRNAs.

Functionally, this is one of the proteins that bind and probably mediate the attachment of the 5S RNA into the large ribosomal subunit, where it forms part of the central protuberance. The chain is Large ribosomal subunit protein uL18 from Syntrophotalea carbinolica (strain DSM 2380 / NBRC 103641 / GraBd1) (Pelobacter carbinolicus).